The primary structure comprises 470 residues: 3-isopropylmalate dehydratase large subunit (470 aa).

Residues Cys-351, Cys-411, and Cys-414 each contribute to the [4Fe-4S] cluster site.

This sequence belongs to the aconitase/IPM isomerase family. LeuC type 1 subfamily. Heterodimer of LeuC and LeuD. It depends on [4Fe-4S] cluster as a cofactor.

It catalyses the reaction (2R,3S)-3-isopropylmalate = (2S)-2-isopropylmalate. It functions in the pathway amino-acid biosynthesis; L-leucine biosynthesis; L-leucine from 3-methyl-2-oxobutanoate: step 2/4. Functionally, catalyzes the isomerization between 2-isopropylmalate and 3-isopropylmalate, via the formation of 2-isopropylmaleate. The protein is 3-isopropylmalate dehydratase large subunit of Rhodopseudomonas palustris (strain HaA2).